The following is a 251-amino-acid chain: DNA repair protein RecO (251 aa).

Belongs to the RecO family.

Functionally, involved in DNA repair and RecF pathway recombination. This chain is DNA repair protein RecO, found in Nitratidesulfovibrio vulgaris (strain ATCC 29579 / DSM 644 / CCUG 34227 / NCIMB 8303 / VKM B-1760 / Hildenborough) (Desulfovibrio vulgaris).